A 289-amino-acid polypeptide reads, in one-letter code: Bifunctional protein FolD 2 (289 aa).

NADP(+) is bound by residues glycine 162–serine 164, serine 187, and isoleucine 228.

It belongs to the tetrahydrofolate dehydrogenase/cyclohydrolase family. Homodimer.

It catalyses the reaction (6R)-5,10-methylene-5,6,7,8-tetrahydrofolate + NADP(+) = (6R)-5,10-methenyltetrahydrofolate + NADPH. It carries out the reaction (6R)-5,10-methenyltetrahydrofolate + H2O = (6R)-10-formyltetrahydrofolate + H(+). The protein operates within one-carbon metabolism; tetrahydrofolate interconversion. Catalyzes the oxidation of 5,10-methylenetetrahydrofolate to 5,10-methenyltetrahydrofolate and then the hydrolysis of 5,10-methenyltetrahydrofolate to 10-formyltetrahydrofolate. The polypeptide is Bifunctional protein FolD 2 (Deinococcus geothermalis (strain DSM 11300 / CIP 105573 / AG-3a)).